Consider the following 245-residue polypeptide: Probable phosphatase YcdX (245 aa).

9 residues coordinate Zn(2+): H7, H9, H15, H40, E73, H101, H131, D192, and H194.

Belongs to the PHP family. As to quaternary structure, homotrimer. It depends on Zn(2+) as a cofactor.

This is Probable phosphatase YcdX from Shigella dysenteriae serotype 1 (strain Sd197).